A 375-amino-acid chain; its full sequence is uncharacterized protein (375 aa).

A compositionally biased stretch (basic residues) spans 1–12; it reads MAGNKKQVKKNT. Disordered regions lie at residues 1 to 76 and 119 to 274; these read MAGN…EKKS and KNKN…KEIK. Residues 26 to 39 show a composition bias toward polar residues; sequence DTSNLDTAVQTSAS. Residues 129 to 141 are compositionally biased toward low complexity; that stretch reads TATDGTTTTTNIP. The segment covering 175 to 185 has biased composition (basic and acidic residues); sequence DETHSHKEEPK. Composition is skewed to low complexity over residues 198–212 and 225–241; these read SKQQATQNVSSSSSS and PTPTTTTQRTTTTKSTP. Over residues 256–274 the composition is skewed to basic and acidic residues; sequence EQPKEKSSPAPVKKEKEIK. The next 2 membrane-spanning stretches (helical) occupy residues 299–319 and 327–347; these read VVYKIIYVALIGVLLFSLVPL and IYSYGVIALVLGLGISLTLFI. Positions 355–375 are disordered; that stretch reads ASKEQKSKSGNKKSTTRKVKA. Residues 363 to 375 are compositionally biased toward basic residues; sequence SGNKKSTTRKVKA.

The protein resides in the membrane. This is an uncharacterized protein from Dictyostelium discoideum (Social amoeba).